Here is an 841-residue protein sequence, read N- to C-terminus: Putative helicase R592 (841 aa).

Residues 72–309 (STFVIETNSA…RRYVNKIFGQ (238 aa)) form the Helicase ATP-binding domain. Residue 85 to 92 (DKVGAGKT) coordinates ATP. The span at 195–205 (KLPVKTTKKGG) shows a compositional bias: basic residues. Residues 195–215 (KLPVKTTKKGGSKTQNKAQND) are disordered. Residues 206–215 (SKTQNKAQND) show a composition bias toward polar residues. Positions 266 to 269 (DEMD) match the DEAD box motif. A coiled-coil region spans residues 413 to 450 (QDVDAHENRKKNIMNNIARCKTKLESIKEKINSIKDEC). An RING-type; degenerate zinc finger spans residues 451–491 (CFICTDPFENPTIMNCCKSIFCLKCLLTTLKTVGSKCPYCR). A Helicase C-terminal domain is found at 531–682 (VLEQVLSYIS…WMITNPTDLN (152 aa)). The interval 678-841 (PTDLNEEPDE…KAPVRKLIKV (164 aa)) is disordered. Positions 681-697 (LNEEPDEESDEGSDEDV) are enriched in acidic residues. Basic and acidic residues predominate over residues 698 to 725 (EKSKDKKSSDKKSSDKKKSEKKSSDKKS). Residues 726 to 749 (SNKKNSKKKTYVKPKSSKKTSQKV) are compositionally biased toward basic residues. Composition is skewed to acidic residues over residues 765–774 (DSDDLDDSDD) and 782–804 (SDSDDFGNLSDSDDLSDSDESEI). Composition is skewed to basic residues over residues 809–821 (KSKKTSKSSKKNK) and 828–841 (TLKKKAPVRKLIKV).

The polypeptide is Putative helicase R592 (Acanthamoeba polyphaga mimivirus (APMV)).